The chain runs to 379 residues: Putative glutamate--cysteine ligase 2 (379 aa).

Belongs to the glutamate--cysteine ligase type 2 family. YbdK subfamily.

It carries out the reaction L-cysteine + L-glutamate + ATP = gamma-L-glutamyl-L-cysteine + ADP + phosphate + H(+). Its function is as follows. ATP-dependent carboxylate-amine ligase which exhibits weak glutamate--cysteine ligase activity. This chain is Putative glutamate--cysteine ligase 2, found in Roseiflexus castenholzii (strain DSM 13941 / HLO8).